A 322-amino-acid polypeptide reads, in one-letter code: Undecaprenyl-phosphate 4-deoxy-4-formamido-L-arabinose transferase (322 aa).

The Cytoplasmic portion of the chain corresponds to 1–235 (MFEIHPVKKV…TCLTTTPLRM (235 aa)). Residues 236–256 (LSLLGSIIAIGGFSIAVLLVI) traverse the membrane as a helical segment. The Periplasmic segment spans residues 257-269 (LRLTFGPQWAAEG). The helical transmembrane segment at 270 to 290 (VFMLFAVLFTFIGAQFIGMGL) threads the bilayer. Topologically, residues 291–322 (LGEYIGRIYTDVRARPRYFVQQVIRPSSKENE) are cytoplasmic.

Belongs to the glycosyltransferase 2 family.

It localises to the cell inner membrane. The enzyme catalyses UDP-4-deoxy-4-formamido-beta-L-arabinose + di-trans,octa-cis-undecaprenyl phosphate = 4-deoxy-4-formamido-alpha-L-arabinopyranosyl di-trans,octa-cis-undecaprenyl phosphate + UDP. It participates in glycolipid biosynthesis; 4-amino-4-deoxy-alpha-L-arabinose undecaprenyl phosphate biosynthesis; 4-amino-4-deoxy-alpha-L-arabinose undecaprenyl phosphate from UDP-4-deoxy-4-formamido-beta-L-arabinose and undecaprenyl phosphate: step 1/2. It functions in the pathway bacterial outer membrane biogenesis; lipopolysaccharide biosynthesis. Its function is as follows. Catalyzes the transfer of 4-deoxy-4-formamido-L-arabinose from UDP to undecaprenyl phosphate. The modified arabinose is attached to lipid A and is required for resistance to polymyxin and cationic antimicrobial peptides. This is Undecaprenyl-phosphate 4-deoxy-4-formamido-L-arabinose transferase from Escherichia coli O45:K1 (strain S88 / ExPEC).